Consider the following 307-residue polypeptide: 4-diphosphocytidyl-2-C-methyl-D-erythritol kinase (307 aa).

Lys-9 is a catalytic residue. 94-104 (PIGAGLAGGSS) contributes to the ATP binding site. The active site involves Asp-136.

The protein belongs to the GHMP kinase family. IspE subfamily.

It carries out the reaction 4-CDP-2-C-methyl-D-erythritol + ATP = 4-CDP-2-C-methyl-D-erythritol 2-phosphate + ADP + H(+). It functions in the pathway isoprenoid biosynthesis; isopentenyl diphosphate biosynthesis via DXP pathway; isopentenyl diphosphate from 1-deoxy-D-xylulose 5-phosphate: step 3/6. Catalyzes the phosphorylation of the position 2 hydroxy group of 4-diphosphocytidyl-2C-methyl-D-erythritol. This chain is 4-diphosphocytidyl-2-C-methyl-D-erythritol kinase, found in Synechococcus sp. (strain CC9605).